Reading from the N-terminus, the 63-residue chain is Large ribosomal subunit protein bL35 (63 aa).

It belongs to the bacterial ribosomal protein bL35 family.

In Sulfurovum sp. (strain NBC37-1), this protein is Large ribosomal subunit protein bL35.